The chain runs to 263 residues: Ubiquitin domain-containing protein 7SL RNA2 (263 aa).

In terms of domain architecture, Ubiquitin-like 1 spans 1-53 (MNVDIDTETGSSFSITIDFGETVLQIKEKIEKSQGIPVSKQILYLDGKALEDD). Residues 74–93 (ADPNQSNEQTEQSKQIDDKK) form a disordered region. Positions 76–86 (PNQSNEQTEQS) are enriched in polar residues. The Ubiquitin-like 2 domain occupies 184 to 263 (FTVHVKPYQE…GDTIELIREK (80 aa)).

The protein belongs to the ubiquitin family. In terms of tissue distribution, expressed in seedlings, roots, stems, rosettes and flowers (at protein level).

Its subcellular location is the nucleus. Its function is as follows. Controls phase transition from the vegetative to the reproductive state. Involved in the maintenance of the shoot apical meristem (SAM) thus preventing inflorescence meristem (IM) formation and subsequent inflorescence stem development during flowering. Regulates leaf and organ morphology. This is Ubiquitin domain-containing protein 7SL RNA2 from Arabidopsis thaliana (Mouse-ear cress).